Reading from the N-terminus, the 449-residue chain is Cytochrome P450 2E1 (449 aa).

Position 254 to 259 (phenylalanine 254 to threonine 259) interacts with substrate. Cysteine 393 serves as a coordination point for heme.

It belongs to the cytochrome P450 family. In terms of assembly, interacts with chaperones HSP70 and HSP90; this interaction is required for initial targeting to mitochondria. Requires heme as cofactor.

The protein resides in the endoplasmic reticulum membrane. Its subcellular location is the microsome membrane. The protein localises to the mitochondrion inner membrane. The catalysed reaction is an organic molecule + reduced [NADPH--hemoprotein reductase] + O2 = an alcohol + oxidized [NADPH--hemoprotein reductase] + H2O + H(+). It carries out the reaction (5Z,8Z,11Z)-eicosatrienoate + reduced [NADPH--hemoprotein reductase] + O2 = 19-hydroxy-(5Z,8Z,11Z)-eicosatrienoate + oxidized [NADPH--hemoprotein reductase] + H2O + H(+). The enzyme catalyses (5Z,8Z,11Z,14Z,17Z)-eicosapentaenoate + reduced [NADPH--hemoprotein reductase] + O2 = 19-hydroxy-(5Z,8Z,11Z,14Z,17Z)-eicosapentaenoate + oxidized [NADPH--hemoprotein reductase] + H2O + H(+). It catalyses the reaction (4Z,7Z,10Z,13Z,16Z,19Z)-docosahexaenoate + reduced [NADPH--hemoprotein reductase] + O2 = 21-hydroxy-(4Z,7Z,10Z,13Z,16Z,19Z)-docosahexaenoate + oxidized [NADPH--hemoprotein reductase] + H2O + H(+). The catalysed reaction is dodecanoate + reduced [NADPH--hemoprotein reductase] + O2 = 11-hydroxydodecanoate + oxidized [NADPH--hemoprotein reductase] + H2O + H(+). It carries out the reaction tetradecanoate + reduced [NADPH--hemoprotein reductase] + O2 = 13-hydroxytetradecanoate + oxidized [NADPH--hemoprotein reductase] + H2O + H(+). The enzyme catalyses 4-nitrophenol + NADPH + O2 + H(+) = 4-nitrocatechol + NADP(+) + H2O. It participates in lipid metabolism; fatty acid metabolism. With respect to regulation, the omega-1 hydroxylase activity is stimulated by cytochrome b5. Functionally, a cytochrome P450 monooxygenase involved in the metabolism of fatty acids. Mechanistically, uses molecular oxygen inserting one oxygen atom into a substrate, and reducing the second into a water molecule, with two electrons provided by NADPH via cytochrome P450 reductase (NADPH--hemoprotein reductase). Catalyzes the hydroxylation of carbon-hydrogen bonds. Hydroxylates fatty acids specifically at the omega-1 position displaying the highest catalytic activity for saturated fatty acids. May be involved in the oxidative metabolism of xenobiotics. This chain is Cytochrome P450 2E1 (CYP2E1), found in Macaca fascicularis (Crab-eating macaque).